Here is a 165-residue protein sequence, read N- to C-terminus: V-type proton ATPase 16 kDa proteolipid subunit (165 aa).

The Lumenal portion of the chain corresponds to 1-10 (MSSTFSGDET). Residues 11-33 (APFFGFLGAAAALVFSCMGAAYG) traverse the membrane as a helical segment. The Cytoplasmic segment spans residues 34-55 (TAKSGVGVASMGVMRPELVMKS). Residues 56–76 (IVPVVMAGVLGIYGLIIAVII) form a helical membrane-spanning segment. Topologically, residues 77–95 (STGINPKAKSYYLFDGYAH) are lumenal. A helical transmembrane segment spans residues 96-117 (LSSGLACGLAGLSAGMAIGIVG). Residues 118 to 129 (DAGVRANAQQPK) are Cytoplasmic-facing. Residues 130 to 155 (LFVGMILILIFAEALALYGLIVGIIL) traverse the membrane as a helical segment. The Lumenal segment spans residues 156-165 (SSRAGQSRAE).

The protein belongs to the V-ATPase proteolipid subunit family. As to quaternary structure, V-ATPase is a heteromultimeric enzyme composed of a peripheral catalytic V1 complex (main components: subunits A, B, C, D, E, and F) attached to an integral membrane V0 proton pore complex (main component: the proteolipid protein; which is present as a hexamer that forms the proton-conducting pore).

Its subcellular location is the vacuole membrane. Its function is as follows. Proton-conducting pore forming subunit of the membrane integral V0 complex of vacuolar ATPase. V-ATPase is responsible for acidifying a variety of intracellular compartments in eukaryotic cells. The protein is V-type proton ATPase 16 kDa proteolipid subunit (CVA16-2) of Gossypium hirsutum (Upland cotton).